We begin with the raw amino-acid sequence, 501 residues long: Ribulose bisphosphate carboxylase large chain (501 aa).

N141 and T191 together coordinate substrate. K193 (proton acceptor) is an active-site residue. K195 contributes to the substrate binding site. The Mg(2+) site is built by K219, D221, and E222. K219 carries the post-translational modification N6-carboxylysine. Catalysis depends on H311, which acts as the Proton acceptor. 3 residues coordinate substrate: R312, H344, and S396.

The protein belongs to the RuBisCO large chain family. Type I subfamily. In terms of assembly, heterohexadecamer of 8 large chains and 8 small chains. It depends on Mg(2+) as a cofactor.

The enzyme catalyses 2 (2R)-3-phosphoglycerate + 2 H(+) = D-ribulose 1,5-bisphosphate + CO2 + H2O. It carries out the reaction D-ribulose 1,5-bisphosphate + O2 = 2-phosphoglycolate + (2R)-3-phosphoglycerate + 2 H(+). In terms of biological role, ruBisCO catalyzes two reactions: the carboxylation of D-ribulose 1,5-bisphosphate, the primary event in carbon dioxide fixation, as well as the oxidative fragmentation of the pentose substrate. Both reactions occur simultaneously and in competition at the same active site. The sequence is that of Ribulose bisphosphate carboxylase large chain from Paraburkholderia phymatum (strain DSM 17167 / CIP 108236 / LMG 21445 / STM815) (Burkholderia phymatum).